The following is a 349-amino-acid chain: 4-hydroxy-2-oxovalerate aldolase 2 (349 aa).

The 253-residue stretch at valine 12–alanine 264 folds into the Pyruvate carboxyltransferase domain. Arginine 20–aspartate 21 serves as a coordination point for substrate. A Mn(2+)-binding site is contributed by aspartate 21. The active-site Proton acceptor is the histidine 24. Residues serine 174 and histidine 203 each contribute to the substrate site. Residues histidine 203 and histidine 205 each coordinate Mn(2+). Substrate is bound at residue tyrosine 294.

The protein belongs to the 4-hydroxy-2-oxovalerate aldolase family.

The catalysed reaction is (S)-4-hydroxy-2-oxopentanoate = acetaldehyde + pyruvate. The chain is 4-hydroxy-2-oxovalerate aldolase 2 (bphI-2) from Mycolicibacterium smegmatis (strain ATCC 700084 / mc(2)155) (Mycobacterium smegmatis).